The sequence spans 40 residues: Protein YneP (40 aa).

In Escherichia coli (strain K12), this protein is Protein YneP.